A 136-amino-acid chain; its full sequence is Large ribosomal subunit protein uL16c (136 aa).

This sequence belongs to the universal ribosomal protein uL16 family. In terms of assembly, part of the 50S ribosomal subunit.

Its subcellular location is the plastid. It is found in the chloroplast. This chain is Large ribosomal subunit protein uL16c, found in Chloranthus spicatus (Chulantree).